A 494-amino-acid polypeptide reads, in one-letter code: Rhamnulokinase (494 aa).

18–22 contributes to the ATP binding site; the sequence is ASSGR. Residues G87 and 242 to 244 each bind substrate; that span reads HDT. D243 functions as the Proton acceptor in the catalytic mechanism. T265 provides a ligand contact to ATP. N302 is a binding site for substrate. Q310 is a binding site for ATP. A disulfide bond links C360 and C377. G411 contacts ATP.

It belongs to the rhamnulokinase family. Mg(2+) serves as cofactor.

The catalysed reaction is L-rhamnulose + ATP = L-rhamnulose 1-phosphate + ADP + H(+). It participates in carbohydrate degradation; L-rhamnose degradation; glycerone phosphate from L-rhamnose: step 2/3. Its function is as follows. Involved in the catabolism of L-rhamnose (6-deoxy-L-mannose). Catalyzes the transfer of the gamma-phosphate group from ATP to the 1-hydroxyl group of L-rhamnulose to yield L-rhamnulose 1-phosphate. The polypeptide is Rhamnulokinase (Enterococcus faecalis (strain ATCC 700802 / V583)).